The following is a 201-amino-acid chain: Transgelin (201 aa).

Ala-2 is modified (N-acetylalanine). Residues 24 to 137 form the Calponin-homology (CH) domain; sequence EELEERLVEW…RTVMALGSLA (114 aa). Residues 154-161 form a could be involved in actin-binding region; sequence KKAQEHKR. Phosphoserine is present on Ser-166. Lys-172 is modified (N6-acetyllysine). The stretch at 175 to 200 is one Calponin-like repeat; that stretch reads IGLQMGSNRGASQAGMTGYGRPRQII. Ser-181 bears the Phosphoserine mark. The residue at position 183 (Arg-183) is an Omega-N-methylarginine.

Belongs to the calponin family. Smooth muscle and mesenchymal cells but not in skeletal muscle or lymphocytes.

Its subcellular location is the cytoplasm. Its function is as follows. Actin cross-linking/gelling protein. This chain is Transgelin (Tagln), found in Rattus norvegicus (Rat).